The following is a 140-amino-acid chain: MAIERTFSILKPDATERNITGAINALIEKAGLRIVAQKRIRMTRDQAETFYAVHKERPFFGELVDFMISGPVVVQVLEGEGAIAKYRDVMGATDPSKAADGTIRKLHAKSIGENSVHGSDAAETAKIEIAQFFSGNEIVG.

ATP is bound by residues K11, F59, R87, T93, R104, and N114. H117 (pros-phosphohistidine intermediate) is an active-site residue.

This sequence belongs to the NDK family. As to quaternary structure, homotetramer. Mg(2+) is required as a cofactor.

Its subcellular location is the cytoplasm. It catalyses the reaction a 2'-deoxyribonucleoside 5'-diphosphate + ATP = a 2'-deoxyribonucleoside 5'-triphosphate + ADP. The catalysed reaction is a ribonucleoside 5'-diphosphate + ATP = a ribonucleoside 5'-triphosphate + ADP. Major role in the synthesis of nucleoside triphosphates other than ATP. The ATP gamma phosphate is transferred to the NDP beta phosphate via a ping-pong mechanism, using a phosphorylated active-site intermediate. This chain is Nucleoside diphosphate kinase, found in Rhodopseudomonas palustris (strain ATCC BAA-98 / CGA009).